Here is a 409-residue protein sequence, read N- to C-terminus: Broad specificity amino-acid racemase (409 aa).

The signal sequence occupies residues 1 to 25; it reads MRLKKTLLSIAIAAATFTPAMHSIA. Residues Cys-72 and Cys-98 are joined by a disulfide bond. Residue Lys-76 is the Proton acceptor of the active site. Lys-76 carries the N6-(pyridoxal phosphate)lysine modification. Arg-175 serves as a coordination point for substrate. Catalysis depends on Tyr-301, which acts as the Proton acceptor. Met-349 lines the substrate pocket.

It belongs to the alanine racemase family. Bsr subfamily. The cofactor is pyridoxal 5'-phosphate.

It localises to the periplasm. The catalysed reaction is an L-alpha-amino acid = a D-alpha-amino acid. It catalyses the reaction L-lysine = D-lysine. It carries out the reaction L-arginine = D-arginine. Amino-acid racemase able to utilize a broad range of substrates. This Vibrio parahaemolyticus serotype O3:K6 (strain RIMD 2210633) protein is Broad specificity amino-acid racemase.